The sequence spans 690 residues: Guanylate cyclase soluble subunit alpha-1 (690 aa).

S267 is modified (phosphoserine). The 128-residue stretch at 481–608 folds into the Guanylate cyclase domain; that stretch reads TMLFSDIVGF…NNVTLANKFE (128 aa).

This sequence belongs to the adenylyl cyclase class-4/guanylyl cyclase family. As to quaternary structure, the active enzyme is formed by a heterodimer of an alpha and a beta subunit. Heterodimer with GUCY1B1. Mg(2+) is required as a cofactor. It depends on Mn(2+) as a cofactor.

It is found in the cytoplasm. It carries out the reaction GTP = 3',5'-cyclic GMP + diphosphate. Its activity is regulated as follows. Activated by nitric oxide in the presence of magnesium or manganese ions. This is Guanylate cyclase soluble subunit alpha-1 (GUCY1A1) from Canis lupus familiaris (Dog).